Consider the following 237-residue polypeptide: Sugar fermentation stimulation protein homolog (237 aa).

This sequence belongs to the SfsA family.

In Pseudomonas syringae pv. tomato (strain ATCC BAA-871 / DC3000), this protein is Sugar fermentation stimulation protein homolog.